The following is a 549-amino-acid chain: Glucose-6-phosphate isomerase (549 aa).

Residue Glu353 is the Proton donor of the active site. Active-site residues include His384 and Lys513.

The protein belongs to the GPI family.

It localises to the cytoplasm. The catalysed reaction is alpha-D-glucose 6-phosphate = beta-D-fructose 6-phosphate. It functions in the pathway carbohydrate biosynthesis; gluconeogenesis. It participates in carbohydrate degradation; glycolysis; D-glyceraldehyde 3-phosphate and glycerone phosphate from D-glucose: step 2/4. In terms of biological role, catalyzes the reversible isomerization of glucose-6-phosphate to fructose-6-phosphate. The polypeptide is Glucose-6-phosphate isomerase (Brucella melitensis biotype 2 (strain ATCC 23457)).